Reading from the N-terminus, the 229-residue chain is Ribonuclease 3 (229 aa).

One can recognise an RNase III domain in the interval 7 to 132 (LRAFESRIGH…VIAAVYLDAG (126 aa)). Glutamate 45 serves as a coordination point for Mg(2+). The active site involves aspartate 49. Residues aspartate 118 and glutamate 121 each contribute to the Mg(2+) site. The active site involves glutamate 121. One can recognise a DRBM domain in the interval 157–226 (DAKTALQEWA…ARALLARMEA (70 aa)).

Belongs to the ribonuclease III family. In terms of assembly, homodimer. Requires Mg(2+) as cofactor.

It is found in the cytoplasm. It carries out the reaction Endonucleolytic cleavage to 5'-phosphomonoester.. In terms of biological role, digests double-stranded RNA. Involved in the processing of primary rRNA transcript to yield the immediate precursors to the large and small rRNAs (23S and 16S). Processes some mRNAs, and tRNAs when they are encoded in the rRNA operon. Processes pre-crRNA and tracrRNA of type II CRISPR loci if present in the organism. This is Ribonuclease 3 from Cereibacter sphaeroides (strain ATCC 17025 / ATH 2.4.3) (Rhodobacter sphaeroides).